We begin with the raw amino-acid sequence, 140 residues long: Protein archease (140 aa).

Ca(2+) is bound by residues Asp-12, Asp-139, and Leu-140.

The protein belongs to the archease family.

Activates the tRNA-splicing ligase complex by facilitating the enzymatic turnover of catalytic subunit RtcB. Acts by promoting the guanylylation of RtcB, a key intermediate step in tRNA ligation. Can also alter the NTP specificity of RtcB such that ATP, dGTP or ITP is used efficiently. May also act as a chaperone or modulator of proteins involved in DNA or RNA processing. This is Protein archease from Methanothermobacter thermautotrophicus (strain ATCC 29096 / DSM 1053 / JCM 10044 / NBRC 100330 / Delta H) (Methanobacterium thermoautotrophicum).